A 367-amino-acid chain; its full sequence is NADH-quinone oxidoreductase subunit H (367 aa).

The next 8 membrane-spanning stretches (helical) occupy residues 18–38 (VLLF…VAYL), 87–107 (LCFL…WAVI), 132–152 (IGVL…IIAG), 180–200 (LTIV…IVIA), 204–224 (MPYW…ISAL), 257–277 (FFLG…IFFF), 291–311 (IIPG…CFIW), and 328–348 (GWKV…GILV).

It belongs to the complex I subunit 1 family. As to quaternary structure, NDH-1 is composed of 14 different subunits. Subunits NuoA, H, J, K, L, M, N constitute the membrane sector of the complex.

Its subcellular location is the cell inner membrane. The enzyme catalyses a quinone + NADH + 5 H(+)(in) = a quinol + NAD(+) + 4 H(+)(out). Functionally, NDH-1 shuttles electrons from NADH, via FMN and iron-sulfur (Fe-S) centers, to quinones in the respiratory chain. The immediate electron acceptor for the enzyme in this species is believed to be ubiquinone. Couples the redox reaction to proton translocation (for every two electrons transferred, four hydrogen ions are translocated across the cytoplasmic membrane), and thus conserves the redox energy in a proton gradient. This subunit may bind ubiquinone. This is NADH-quinone oxidoreductase subunit H from Ehrlichia ruminantium (strain Gardel).